The sequence spans 293 residues: N-acetylmannosamine kinase (293 aa).

Residues alanine 5–lysine 12 and glycine 133–isoleucine 140 contribute to the ATP site. Zn(2+) contacts are provided by histidine 157, cysteine 167, cysteine 169, and cysteine 174.

The protein belongs to the ROK (NagC/XylR) family. NanK subfamily. In terms of assembly, homodimer.

The enzyme catalyses an N-acyl-D-mannosamine + ATP = an N-acyl-D-mannosamine 6-phosphate + ADP + H(+). It functions in the pathway amino-sugar metabolism; N-acetylneuraminate degradation; D-fructose 6-phosphate from N-acetylneuraminate: step 2/5. In terms of biological role, catalyzes the phosphorylation of N-acetylmannosamine (ManNAc) to ManNAc-6-P. This Vibrio vulnificus (strain CMCP6) protein is N-acetylmannosamine kinase.